A 695-amino-acid chain; its full sequence is Segment polarity protein dishevelled homolog DVL-1 (695 aa).

The region spanning 1 to 85 is the DIX domain; that stretch reads MAETKIIYHM…RVVSWLVLAE (85 aa). The segment at 89 to 237 is disordered; the sequence is SDAGSQGTDS…LRQADRASSF (149 aa). Basic residues predominate over residues 142-151; that stretch reads SHRRERARRR. The span at 152–171 shows a compositional bias: basic and acidic residues; that stretch reads NREEAARTNGHPRGDRRRDV. The segment covering 176-192 has biased composition (low complexity); sequence DSASTALSSELESSSFV. S194 is subject to Phosphoserine. Over residues 200–214 the composition is skewed to low complexity; the sequence is TSRLSSSTEQSTSSR. The segment covering 215 to 228 has biased composition (basic residues); that stretch reads LIRKHKRRRRKQRL. The PDZ domain occupies 251 to 323; that stretch reads TVTLNMERHH…NDDAVRVLRE (73 aa). One can recognise a DEP domain in the interval 425-499; it reads PDSGLEIRDR…SEQCYYVFGD (75 aa). Residues 543–667 are disordered; it reads PGPPPCFPPA…PGGPPVRELA (125 aa). Positions 551–580 are enriched in low complexity; it reads PAYQDPGFSYGSGSTGSQQSEGSKSSGSTR. The segment covering 625–636 has biased composition (polar residues); that stretch reads SRGSSPRSQASA.

This sequence belongs to the DSH family. As to quaternary structure, interacts with CXXC4. Interacts (via PDZ domain) with NXN. Interacts with BRD7 and INVS. Interacts (via PDZ domain) with VANGL1 and VANGL2 (via C-terminus). Interacts with ARRB1; the interaction is enhanced by phosphorylation of DVL1. Interacts with CYLD. Interacts (via PDZ domain) with RYK. Self-associates (via DIX domain) and forms higher homooligomers. Interacts (via PDZ domain) with DACT1 and FZD7, where DACT1 and FZD7 compete for the same binding site. Interacts (via DEP domain) with MUSK; the interaction is direct and mediates the formation a DVL1, MUSK and PAK1 ternary complex involved in AChR clustering. Interacts (via PDZ domain) with TMEM88. Interacts with DCDC2. Interacts with FOXK2. Interacts with PKD1 (via extracellular domain). Interacts (via PDZ domain) with CCDC88C/DAPLE; competes with CCDC88C for binding to frizzled receptor FZD7 and dissociates from CCDC88C following initiation of non-canonical Wnt signaling when CCDC88C displaces DVL1 from ligand-activated FZD7. Ubiquitinated; undergoes both 'Lys-48'-linked ubiquitination, leading to its subsequent degradation by the ubiquitin-proteasome pathway, and 'Lys-63'-linked ubiquitination. The interaction with INVS is required for ubiquitination. Deubiquitinated by CYLD, which acts on 'Lys-63'-linked ubiquitin chains.

The protein localises to the cell membrane. The protein resides in the cytoplasm. Its subcellular location is the cytosol. It is found in the cytoplasmic vesicle. Participates in Wnt signaling by binding to the cytoplasmic C-terminus of frizzled family members and transducing the Wnt signal to down-stream effectors. Plays a role both in canonical and non-canonical Wnt signaling. Plays a role in the signal transduction pathways mediated by multiple Wnt genes. Required for LEF1 activation upon WNT1 and WNT3A signaling. DVL1 and PAK1 form a ternary complex with MUSK which is important for MUSK-dependent regulation of AChR clustering during the formation of the neuromuscular junction (NMJ). The sequence is that of Segment polarity protein dishevelled homolog DVL-1 (DVL1) from Homo sapiens (Human).